We begin with the raw amino-acid sequence, 584 residues long: High-affinity choline transporter 1 (584 aa).

Residues 1–6 (MTVHID) lie on the Extracellular side of the membrane. Residues 7–27 (GIVAIVLFYLLILFVGLWAAW) traverse the membrane as a helical segment. Topologically, residues 28–50 (KSKNTSMEGAMDRSEAIMIGGRD) are cytoplasmic. The helical transmembrane segment at 51 to 71 (IGLLVGGFTMTATWVGGGYIN) threads the bilayer. The Extracellular portion of the chain corresponds to 72–83 (GTAEAVYVPGYG). A helical membrane pass occupies residues 84-104 (LAWAQAPFGYALSLVIGGLFF). Topologically, residues 105-127 (AKPMRSRGYVTMLDPFQQMYGKR) are cytoplasmic. The helical transmembrane segment at 128 to 148 (MGGLLFIPALLGEIFWSAAIL) threads the bilayer. The Extracellular portion of the chain corresponds to 149-166 (SALGATLSVIVDININVS). A helical membrane pass occupies residues 167 to 187 (VVVSAVIAVLYTLVGGLYSVA). The Cytoplasmic portion of the chain corresponds to 188 to 193 (YTDVVQ). Residues 194 to 214 (LFCIFLGLWISIPFALLNPAV) traverse the membrane as a helical segment. Over 215 to 239 (TDIIVTANQEVYQEPWVGNIQSKDS) the chain is Extracellular. Residues 240-260 (LIWIDNFLLLMLGGIPWQVYF) form a helical membrane-spanning segment. Residues 261-276 (QRVLSASSATYAQVLS) are Cytoplasmic-facing. A helical transmembrane segment spans residues 277 to 297 (FLAAFGCVLMAIPSVLIGAIG). The Extracellular segment spans residues 298-319 (TSTDWNQTSYGLPGPIGKNETD). Asn303 carries N-linked (GlcNAc...) asparagine glycosylation. The helical transmembrane segment at 320–340 (MILPIVLQHLCPPYISFFGLG) threads the bilayer. The Cytoplasmic segment spans residues 341-378 (AVSAAVMSSADSSILSASSMFARNIYHLAFRQEASDKE). A helical transmembrane segment spans residues 379 to 399 (IVWVMRITIFLFGGAATSMAL). The Extracellular portion of the chain corresponds to 400 to 408 (LAQSIYGLW). A helical membrane pass occupies residues 409–429 (YLSSDLVYVIIFPQLISVLFV). Topologically, residues 430–437 (KGTNTYGS) are cytoplasmic. The chain crosses the membrane as a helical span at residues 438 to 458 (IAGYIIGFLLRISGGEPYLHM). Over 459–487 (QPFIYYPGCYLDHSFGDDPVYVQRFPFKT) the chain is Extracellular. The chain crosses the membrane as a helical span at residues 488–508 (MAMLFSFLGNTGVSYLVKYLF). Topologically, residues 509 to 584 (VSGILPPKLD…NPELSKSGND (76 aa)) are cytoplasmic.

It belongs to the sodium:solute symporter (SSF) (TC 2.A.21) family. In terms of processing, phosphorylated. Specific for cholinergic neurons.

It localises to the membrane. Functionally, imports choline from the extracellular space to the neuron with high affinity. Rate-limiting step in acetylcholine synthesis. Sodium ion and chloride ion dependent. This is High-affinity choline transporter 1 (CHT1) from Torpedo marmorata (Marbled electric ray).